A 109-amino-acid polypeptide reads, in one-letter code: Large ribosomal subunit protein P1 (109 aa).

Residues 71–109 (APAAASSAPAKKEEPKKEEPKKEEPKEEETDMDMGDLFG) are disordered. The span at 80–95 (AKKEEPKKEEPKKEEP) shows a compositional bias: basic and acidic residues. 3 repeat units span residues 81 to 85 (KKEEP), 86 to 90 (KKEEP), and 91 to 95 (KKEEP). A 3 X 5 AA tandem repeats of K-K-E-E-P region spans residues 81 to 95 (KKEEPKKEEPKKEEP). Residues 96–109 (KEEETDMDMGDLFG) are compositionally biased toward acidic residues.

This sequence belongs to the eukaryotic ribosomal protein P1/P2 family. Not phosphorylated.

This Tetrahymena thermophila protein is Large ribosomal subunit protein P1 (RPLP1).